We begin with the raw amino-acid sequence, 148 residues long: Large ribosomal subunit protein bL9 (148 aa).

Belongs to the bacterial ribosomal protein bL9 family.

Binds to the 23S rRNA. The protein is Large ribosomal subunit protein bL9 of Bacillus cereus (strain G9842).